Reading from the N-terminus, the 469-residue chain is 3-isopropylmalate dehydratase large subunit 2 (469 aa).

[4Fe-4S] cluster is bound by residues cysteine 347, cysteine 408, and cysteine 411.

The protein belongs to the aconitase/IPM isomerase family. LeuC type 1 subfamily. As to quaternary structure, heterodimer of LeuC and LeuD. [4Fe-4S] cluster is required as a cofactor.

It carries out the reaction (2R,3S)-3-isopropylmalate = (2S)-2-isopropylmalate. The protein operates within amino-acid biosynthesis; L-leucine biosynthesis; L-leucine from 3-methyl-2-oxobutanoate: step 2/4. Functionally, catalyzes the isomerization between 2-isopropylmalate and 3-isopropylmalate, via the formation of 2-isopropylmaleate. This chain is 3-isopropylmalate dehydratase large subunit 2, found in Mannheimia succiniciproducens (strain KCTC 0769BP / MBEL55E).